The sequence spans 546 residues: Chaperonin GroEL 6 (546 aa).

ATP-binding positions include 30-33 (TLGP), K51, 87-91 (DGTTT), G415, and D496.

It belongs to the chaperonin (HSP60) family. In terms of assembly, forms a cylinder of 14 subunits composed of two heptameric rings stacked back-to-back. Interacts with the co-chaperonin GroES.

The protein resides in the cytoplasm. It carries out the reaction ATP + H2O + a folded polypeptide = ADP + phosphate + an unfolded polypeptide.. Together with its co-chaperonin GroES, plays an essential role in assisting protein folding. The GroEL-GroES system forms a nano-cage that allows encapsulation of the non-native substrate proteins and provides a physical environment optimized to promote and accelerate protein folding. The sequence is that of Chaperonin GroEL 6 from Bradyrhizobium diazoefficiens (strain JCM 10833 / BCRC 13528 / IAM 13628 / NBRC 14792 / USDA 110).